A 494-amino-acid chain; its full sequence is UPF0371 protein SPy_1343/M5005_Spy1095 (494 aa).

It belongs to the UPF0371 family.

This chain is UPF0371 protein SPy_1343/M5005_Spy1095, found in Streptococcus pyogenes serotype M1.